The following is a 633-amino-acid chain: 1-deoxy-D-xylulose-5-phosphate synthase (633 aa).

Residues histidine 72 and 113-115 each bind thiamine diphosphate; that span reads GHS. Mg(2+) is bound at residue aspartate 144. Thiamine diphosphate contacts are provided by residues 145–146, asparagine 173, tyrosine 284, and glutamate 367; that span reads GA. Position 173 (asparagine 173) interacts with Mg(2+).

It belongs to the transketolase family. DXPS subfamily. Homodimer. Requires Mg(2+) as cofactor. It depends on thiamine diphosphate as a cofactor.

It catalyses the reaction D-glyceraldehyde 3-phosphate + pyruvate + H(+) = 1-deoxy-D-xylulose 5-phosphate + CO2. The protein operates within metabolic intermediate biosynthesis; 1-deoxy-D-xylulose 5-phosphate biosynthesis; 1-deoxy-D-xylulose 5-phosphate from D-glyceraldehyde 3-phosphate and pyruvate: step 1/1. Its function is as follows. Catalyzes the acyloin condensation reaction between C atoms 2 and 3 of pyruvate and glyceraldehyde 3-phosphate to yield 1-deoxy-D-xylulose-5-phosphate (DXP). This Bacillus licheniformis (strain ATCC 14580 / DSM 13 / JCM 2505 / CCUG 7422 / NBRC 12200 / NCIMB 9375 / NCTC 10341 / NRRL NRS-1264 / Gibson 46) protein is 1-deoxy-D-xylulose-5-phosphate synthase.